Here is a 43-residue protein sequence, read N- to C-terminus: Protein PsbN (43 aa).

A helical transmembrane segment spans residues 5–27 (TLVTISISCLLVSFTGYALYTAF).

It belongs to the PsbN family.

Its subcellular location is the plastid. The protein localises to the chloroplast thylakoid membrane. Its function is as follows. May play a role in photosystem I and II biogenesis. The sequence is that of Protein PsbN from Pinus koraiensis (Korean pine).